The chain runs to 137 residues: MRTLGVDLGRVRIGLAVADEILRTARAVTTVVRRGEAEDLAAIAEVARDYEVTRAVVGLPLNMDGTEGPSARLARGFAPRLEAALGVPVELFDERLSSFEAESRLRARGVSARDQRGQVDAEAAAVILQGWLDRRAP.

This sequence belongs to the YqgF nuclease family.

Its subcellular location is the cytoplasm. In terms of biological role, could be a nuclease involved in processing of the 5'-end of pre-16S rRNA. The polypeptide is Putative pre-16S rRNA nuclease (Anaeromyxobacter dehalogenans (strain 2CP-C)).